The following is an 82-amino-acid chain: Large ribosomal subunit protein bL27 (82 aa).

The interval 1–26 is disordered; sequence MAHKKGQGASRNGRDSESKRLGMKVG.

This sequence belongs to the bacterial ribosomal protein bL27 family.

In Chlamydia felis (strain Fe/C-56) (Chlamydophila felis), this protein is Large ribosomal subunit protein bL27.